Consider the following 762-residue polypeptide: Probable inorganic carbon transporter subunit DabA (762 aa).

Cysteine 279, aspartate 281, histidine 461, and cysteine 476 together coordinate Zn(2+).

It belongs to the inorganic carbon transporter (TC 9.A.2) DabA family. In terms of assembly, forms a complex with DabB. Zn(2+) serves as cofactor.

It is found in the cell inner membrane. Its function is as follows. Part of an energy-coupled inorganic carbon pump. This chain is Probable inorganic carbon transporter subunit DabA, found in Legionella pneumophila subsp. pneumophila (strain Philadelphia 1 / ATCC 33152 / DSM 7513).